A 147-amino-acid chain; its full sequence is uncharacterized protein (147 aa).

Positions 1-137 (MRDNTIGSLI…LYELMTKVHK (137 aa)) constitute an HTH marR-type domain. A DNA-binding region (H-T-H motif) is located at residues 53 to 76 (QMELAEKVTVTQGGISRMLTRLEK).

This is an uncharacterized protein from Bacillus cereus (strain ATCC 14579 / DSM 31 / CCUG 7414 / JCM 2152 / NBRC 15305 / NCIMB 9373 / NCTC 2599 / NRRL B-3711).